A 288-amino-acid chain; its full sequence is Protoheme IX farnesyltransferase (288 aa).

A run of 9 helical transmembrane segments spans residues valine 6–leucine 26, phenylalanine 44–isoleucine 64, leucine 89–isoleucine 109, valine 111–phenylalanine 131, isoleucine 138–valine 158, leucine 169–phenylalanine 189, isoleucine 213–isoleucine 233, leucine 238–isoleucine 258, and isoleucine 268–valine 288.

This sequence belongs to the UbiA prenyltransferase family. Protoheme IX farnesyltransferase subfamily.

It localises to the cell membrane. The enzyme catalyses heme b + (2E,6E)-farnesyl diphosphate + H2O = Fe(II)-heme o + diphosphate. The protein operates within porphyrin-containing compound metabolism; heme O biosynthesis; heme O from protoheme: step 1/1. Functionally, converts heme B (protoheme IX) to heme O by substitution of the vinyl group on carbon 2 of heme B porphyrin ring with a hydroxyethyl farnesyl side group. This is Protoheme IX farnesyltransferase from Buchnera aphidicola subsp. Baizongia pistaciae (strain Bp).